Here is a 232-residue protein sequence, read N- to C-terminus: DQGAGATYLEPSASQIGHKESIKDTARVLGRMYDAIEYRGFGQEIIEELAKYAGVPVFNGLTNEFHPTQMLADALTMREHSSKPLNQTAFAYVGDARYNMGNSLLILGAKLGMDVRIGAPESLWPSEGIIAAAHAVAKETGAKITLTENAHEAVNGVGFIHTDVWVSMGEPKEVWQERIDLLKDYRVTPELMAASGNPQVKFMHCLPAFHNRETKVGEWIYETFGLNGVEVT.

Carbamoyl phosphate-binding positions include Gln-15, Arg-39, and 66 to 69 (HPTQ). L-ornithine is bound by residues Asn-99, Asp-163, and 167-168 (SM). Carbamoyl phosphate-binding positions include 204 to 207 (HCLP) and Thr-232.

The protein belongs to the aspartate/ornithine carbamoyltransferase superfamily. OTCase family.

It is found in the cytoplasm. The enzyme catalyses carbamoyl phosphate + L-ornithine = L-citrulline + phosphate + H(+). It participates in amino-acid biosynthesis; L-arginine biosynthesis; L-arginine from L-ornithine and carbamoyl phosphate: step 1/3. In terms of biological role, reversibly catalyzes the transfer of the carbamoyl group from carbamoyl phosphate (CP) to the N(epsilon) atom of ornithine (ORN) to produce L-citrulline. This is Ornithine carbamoyltransferase (argF) from Neisseria perflava.